Reading from the N-terminus, the 561-residue chain is Guanine nucleotide-binding protein-like 3 (561 aa).

Residues 28–46 show a composition bias toward basic residues; it reads HNRKLKKAAKKQGISRKAK. 2 disordered regions span residues 28 to 58 and 76 to 110; these read HNRK…APFK and KEQN…KKAK. The stretch at 53–98 forms a coiled coil; the sequence is NSAPFKEEVLREAEQRKQELETLKEQNKIVKQQEKAAKRKKEKDAA. Basic and acidic residues predominate over residues 76–88; that stretch reads KEQNKIVKQQEKA. The CP-type G domain occupies 133-319; sequence CQELNKVIEA…MIDSPGILAA (187 aa). GTP is bound by residues 181–184, 268–275, and 312–315; these read NKID, GFPNVGKS, and DSPG. The tract at residues 486–532 is disordered; sequence ATTTDAEEEKMDTTTNTDEPEAESHISSTVEPIQEPTEKRKDKPAKE. Residues 521 to 532 are compositionally biased toward basic and acidic residues; sequence PTEKRKDKPAKE.

This sequence belongs to the TRAFAC class YlqF/YawG GTPase family.

It is found in the nucleus. It localises to the nucleolus. May play a role in regulating cellular proliferation. This Danio rerio (Zebrafish) protein is Guanine nucleotide-binding protein-like 3 (gnl3).